We begin with the raw amino-acid sequence, 762 residues long: Dolichyl-phosphate-mannose--protein mannosyltransferase 4 (762 aa).

The span at 1-10 (MSVPKKRNHG) shows a compositional bias: basic residues. A disordered region spans residues 1–24 (MSVPKKRNHGKLPPSTKDVDDPSL). The Lumenal segment spans residues 1–53 (MSVPKKRNHGKLPPSTKDVDDPSLKYTKAAPKCEQVAEHWLLQPLPEPESRYS). A helical transmembrane segment spans residues 54–74 (FWVTIVTLLAFAARFYKIWYP). The Cytoplasmic segment spans residues 75 to 136 (KEVVFDEVHF…IGYSYETHPA (62 aa)). A helical membrane pass occupies residues 137 to 157 (PYIAYRSFNAILGTLTVPIMF). The Lumenal segment spans residues 158–166 (NTLKELNFR). The helical transmembrane segment at 167–187 (AITCAFASLLVAIDTAHVTET) threads the bilayer. Residues 188–189 (RL) are Cytoplasmic-facing. A helical transmembrane segment spans residues 190-210 (ILLDAILIISIAATMYCYVRF). Residues 211-217 (YKCQLRQ) lie on the Lumenal side of the membrane. The helical transmembrane segment at 218-238 (PFTWSWYIWLHATGLSLSFVI) threads the bilayer. Residues 239 to 242 (STKY) lie on the Cytoplasmic side of the membrane. Residues 243-263 (VGVMTYSAIGFAAVVNLWQLL) traverse the membrane as a helical segment. Residues 264 to 283 (DIKAGLSLRQFMRHFSKRLN) are Lumenal-facing. A helical transmembrane segment spans residues 284–304 (GLVLIPFVIYLFWFWVHFTVL). Topologically, residues 305–593 (NTSGPGDAFM…NGDEKKQIYF (289 aa)) are cytoplasmic. MIR domains are found at residues 331-391 (SKTV…VLPP), 399-458 (GQAV…FQPL), and 464-521 (GHVL…VDEI). The chain crosses the membrane as a helical span at residues 594–614 (IGNIIGWWFQVISLAVFVGII). Topologically, residues 615–635 (VADLITRHRGYYALNKMTREK) are lumenal. The chain crosses the membrane as a helical span at residues 636-656 (LYGPLMFFFVSWCCHYFPFFL). Topologically, residues 657–716 (MARQKFLHHYLPAHLIACLFSGALWEVIFSDCKSLDLEKDEDISGASYERNPKVYVKPYT) are cytoplasmic. A helical membrane pass occupies residues 717–737 (VFLVCVSCAVAWFFVYFSPLV). Residues 738 to 762 (YGDVSLSPSEVVSREWFDIELNFSK) lie on the Lumenal side of the membrane. N-linked (GlcNAc...) asparagine glycosylation occurs at asparagine 759.

Belongs to the glycosyltransferase 39 family. Forms a functional homodimer and may form a heterodimer with PMT6. Interacts with RCR1.

Its subcellular location is the endoplasmic reticulum membrane. The catalysed reaction is a di-trans,poly-cis-dolichyl beta-D-mannosyl phosphate + L-seryl-[protein] = 3-O-(alpha-D-mannosyl)-L-seryl-[protein] + a di-trans,poly-cis-dolichyl phosphate + H(+). The enzyme catalyses a di-trans,poly-cis-dolichyl beta-D-mannosyl phosphate + L-threonyl-[protein] = 3-O-(alpha-D-mannosyl)-L-threonyl-[protein] + a di-trans,poly-cis-dolichyl phosphate + H(+). It participates in protein modification; protein glycosylation. Its function is as follows. Protein O-mannosyltransferase involved in O-glycosylation which is essential for cell wall rigidity. Forms a homodimeric complex to transfer mannose from Dol-P-mannose to Ser or Thr residues on proteins. Specifically acts on secretory proteins with an ER-luminally oriented Ser/Thr-rich region flanked by a membrane anchor such as FUS1, AXL2, GAS1, KEX2, MID2, WSC1, WSC2, OPY2, PRM5, RAX2, or YNL176. The protein is Dolichyl-phosphate-mannose--protein mannosyltransferase 4 of Saccharomyces cerevisiae (strain ATCC 204508 / S288c) (Baker's yeast).